Here is a 416-residue protein sequence, read N- to C-terminus: UV excision repair protein RAD23 homolog B (416 aa).

One can recognise a Ubiquitin-like domain in the interval 1–79 (MQVTLKTLQQ…VVVMVTKPKA (79 aa)). Over residues 83 to 111 (AVPATTQPSSTPSPTAVSSSPAVAAAQAP) the composition is skewed to low complexity. The segment at 83-175 (AVPATTQPSS…STPGDSSRSN (93 aa)) is disordered. Positions 112–121 (APTPALPPTS) are enriched in pro residues. The span at 122 to 143 (TPASTAPASTTASSEPAPAGAT) shows a compositional bias: low complexity. Position 155 is a phosphothreonine (threonine 155). Residues serine 160 and serine 174 each carry the phosphoserine modification. At threonine 186 the chain carries Phosphothreonine. The region spanning 188–228 (QSYENMVTEIMSMGYEREQVIAALRASFNNPDRAVEYLLMG) is the UBA 1 domain. At serine 199 the chain carries Phosphoserine. Phosphotyrosine is present on tyrosine 202. The STI1 domain occupies 274–317 (HPLEFLRNQPQFQQMRQIIQQNPSLLPALLQQIGRENPQLLQQI). A disordered region spans residues 333–356 (QEAGSQGGGGGGGGGGGGGGGGGI). Positions 337 to 356 (SQGGGGGGGGGGGGGGGGGI) are enriched in gly residues. The UBA 2 domain occupies 371 to 411 (PQEKEAIERLKALGFPEGLVIQAYFACEKNENLAANFLLQQ).

It belongs to the RAD23 family. As to quaternary structure, component of the XPC complex composed of XPC, RAD23B and CETN2. Interacts with NGLY1 and PSMC1. Interacts with ATXN3. Interacts with AMFR. Interacts with VCP; the interaction is indirect and mediated by NGLY1.

The protein resides in the nucleus. It localises to the cytoplasm. In terms of biological role, multiubiquitin chain receptor involved in modulation of proteasomal degradation. Binds to polyubiquitin chains. Proposed to be capable to bind simultaneously to the 26S proteasome and to polyubiquitinated substrates and to deliver ubiquitinated proteins to the proteasome. May play a role in endoplasmic reticulum-associated degradation (ERAD) of misfolded glycoproteins by association with PNGase and delivering deglycosylated proteins to the proteasome. Functionally, involved in global genome nucleotide excision repair (GG-NER) by acting as component of the XPC complex. Cooperatively with Cetn2 appears to stabilize Xpc. May protect Xpc from proteasomal degradation. The XPC complex is proposed to represent the first factor bound at the sites of DNA damage and together with other core recognition factors, Xpa, RPA and the TFIIH complex, is part of the pre-incision (or initial recognition) complex. The XPC complex recognizes a wide spectrum of damaged DNA characterized by distortions of the DNA helix such as single-stranded loops, mismatched bubbles or single-stranded overhangs. The orientation of XPC complex binding appears to be crucial for inducing a productive NER. XPC complex is proposed to recognize and to interact with unpaired bases on the undamaged DNA strand which is followed by recruitment of the TFIIH complex and subsequent scanning for lesions in the opposite strand in a 5'-to-3' direction by the NER machinery. Cyclobutane pyrimidine dimers (CPDs) which are formed upon UV-induced DNA damage esacpe detection by the XPC complex due to a low degree of structural perurbation. Instead they are detected by the UV-DDB complex which in turn recruits and cooperates with the XPC complex in the respective DNA repair. In vitro, the Xpc:Rad23b dimer is sufficient to initiate NER; it preferentially binds to cisplatin and UV-damaged double-stranded DNA and also binds to a variety of chemically and structurally diverse DNA adducts. Xpc:Rad23b contacts DNA both 5' and 3' of a cisplatin lesion with a preference for the 5' side. Xpc:Rad23bB induces a bend in DNA upon binding. Xpc:Rad23b stimulates the activity of DNA glycosylases Tdg and Smug1. The sequence is that of UV excision repair protein RAD23 homolog B (Rad23b) from Mus musculus (Mouse).